Here is a 186-residue protein sequence, read N- to C-terminus: CASP-like protein ARALYDRAFT_316979 (186 aa).

Residues 1–23 (MRRNGDGEEVVAKRRRRIKELVQ) lie on the Cytoplasmic side of the membrane. Residues 24–44 (VALRGGCLAASATAMAVMLTA) form a helical membrane-spanning segment. At 45–70 (TEEGVADIYGFKLTLSSNWSFSPSYQ) the chain is on the extracellular side. A glycan (N-linked (GlcNAc...) asparagine) is linked at N62. The chain crosses the membrane as a helical span at residues 71-91 (YVVGACTGTVLYSLFQLCLGV). At 92–115 (YRLLTGSPITPSRFQAWLCFTSDQ) the chain is on the cytoplasmic side. Residues 116-132 (LFGYLMMSAGSAGSGVT) form a helical membrane-spanning segment. Over 133-161 (NLNKTGIRHTPLPDFCKTLSSFCNHVALS) the chain is Extracellular. Residue N135 is glycosylated (N-linked (GlcNAc...) asparagine). The chain crosses the membrane as a helical span at residues 162 to 182 (LLLVFLSFIFLASSSFFTVLV). At 183–186 (LSTP) the chain is on the cytoplasmic side.

The protein belongs to the Casparian strip membrane proteins (CASP) family. As to quaternary structure, homodimer and heterodimers.

Its subcellular location is the cell membrane. The sequence is that of CASP-like protein ARALYDRAFT_316979 from Arabidopsis lyrata subsp. lyrata (Lyre-leaved rock-cress).